We begin with the raw amino-acid sequence, 446 residues long: Coiled-coil domain-containing protein 112 (446 aa).

Coiled coils occupy residues 35–116 and 219–400; these read KTER…RKID and ERKK…NVSR. 2 disordered regions span residues 253 to 272 and 390 to 430; these read FHNKQEDNQKQKEEQRKKQK and LKEK…LLHI. Residues 255–268 are compositionally biased toward basic and acidic residues; that stretch reads NKQEDNQKQKEEQR.

It localises to the cytoplasm. The protein localises to the cytoskeleton. Its subcellular location is the microtubule organizing center. It is found in the centrosome. The protein resides in the centriolar satellite. The polypeptide is Coiled-coil domain-containing protein 112 (CCDC112) (Homo sapiens (Human)).